A 319-amino-acid polypeptide reads, in one-letter code: Glycine--tRNA ligase alpha subunit (319 aa).

This sequence belongs to the class-II aminoacyl-tRNA synthetase family. As to quaternary structure, tetramer of two alpha and two beta subunits.

The protein resides in the cytoplasm. The catalysed reaction is tRNA(Gly) + glycine + ATP = glycyl-tRNA(Gly) + AMP + diphosphate. The sequence is that of Glycine--tRNA ligase alpha subunit from Oenococcus oeni (strain ATCC BAA-331 / PSU-1).